The chain runs to 761 residues: 1,2-alpha-glucosylglycerol phosphorylase (761 aa).

A glycerol-binding site is contributed by 327–328; that stretch reads YQ. 333 to 334 contributes to the substrate binding site; that stretch reads WD. The active-site Proton donor is glutamate 475. Residue 587–588 participates in substrate binding; the sequence is KQ.

Belongs to the glycosyl hydrolase 65 family. Homodimer.

The enzyme catalyses 2-O-(alpha-D-glucopyranosyl)glycerol + phosphate = beta-D-glucose 1-phosphate + glycerol. Functionally, catalyzes both the (1) reversible phosphorolysis of 2-O-alpha-D-glucopyranosyl-sn-glycerol (GG) from beta-D-glucose 1-phosphate (betaGlc1P) and glycerol and (2) the hydrolysis of betaGlc1P. the betaGlc1P hydrolysis is a glucosyl-transfer reaction to an acceptor water molecule that produces an anomer-inverted alpha-glucose, not a phosphatase-type reaction. In the absence of glycerol produces alpha-D-glucopyranose and phosphate from beta-D-glucopyranose 1-phosphate. This chain is 1,2-alpha-glucosylglycerol phosphorylase, found in Bacillus selenitireducens (strain ATCC 700615 / DSM 15326 / MLS10).